A 720-amino-acid chain; its full sequence is Connector enhancer of kinase suppressor of ras 1 (720 aa).

Positions Trp-7–Leu-70 constitute an SAM domain. In terms of domain architecture, CRIC spans Asn-78–Ala-164. Residues Lys-196–Pro-285 enclose the PDZ domain. The tract at residues Pro-285 to Arg-390 is disordered. Residues Arg-304–Ala-317 are compositionally biased toward low complexity. Phosphoserine occurs at positions 307 and 314. Residues Glu-348 to Ile-359 show a composition bias toward pro residues. A compositionally biased stretch (basic residues) spans Val-379–Arg-390. The PH domain maps to Arg-403 to Ser-502. A disordered region spans residues Tyr-504 to Ser-573. The segment covering Cys-518–Glu-530 has biased composition (acidic residues). The segment covering Ser-533–Pro-546 has biased composition (low complexity). Positions Pro-553–Asp-571 are enriched in polar residues. Residues Gln-615–Asp-646 are a coiled coil. Positions Gln-676–Leu-720 are disordered. Polar residues predominate over residues Glu-678–Ser-695.

This sequence belongs to the CNKSR family. As to quaternary structure, interacts with RHO and RALGDS. In terms of processing, phosphorylated on tyrosine.

The protein localises to the cytoplasm. Its subcellular location is the membrane. May function as an adapter protein or regulator of Ras signaling pathways. The chain is Connector enhancer of kinase suppressor of ras 1 (CNKSR1) from Homo sapiens (Human).